Consider the following 165-residue polypeptide: Transcription antitermination protein NusB (165 aa).

Residues 1-27 (MISDDTDQFNPRDAKSPEIAKGKSAKR) are disordered. A compositionally biased stretch (basic and acidic residues) spans 10-21 (NPRDAKSPEIAK).

Belongs to the NusB family.

Functionally, involved in transcription antitermination. Required for transcription of ribosomal RNA (rRNA) genes. Binds specifically to the boxA antiterminator sequence of the ribosomal RNA (rrn) operons. The chain is Transcription antitermination protein NusB from Pseudomonas syringae pv. tomato (strain ATCC BAA-871 / DC3000).